A 272-amino-acid chain; its full sequence is Undecaprenyl-diphosphatase (272 aa).

Transmembrane regions (helical) follow at residues phenylalanine 4–isoleucine 24, glycine 43–tyrosine 63, isoleucine 86–isoleucine 106, valine 109–tryptophan 129, isoleucine 145–threonine 165, threonine 186–isoleucine 206, valine 222–valine 242, and valine 249–asparagine 269.

This sequence belongs to the UppP family.

It localises to the cell inner membrane. The catalysed reaction is di-trans,octa-cis-undecaprenyl diphosphate + H2O = di-trans,octa-cis-undecaprenyl phosphate + phosphate + H(+). Functionally, catalyzes the dephosphorylation of undecaprenyl diphosphate (UPP). Confers resistance to bacitracin. This Acinetobacter baumannii (strain SDF) protein is Undecaprenyl-diphosphatase.